Here is a 217-residue protein sequence, read N- to C-terminus: Thymidylate kinase (217 aa).

Residue 11–18 (GLEGAGKS) coordinates ATP.

Belongs to the thymidylate kinase family.

The enzyme catalyses dTMP + ATP = dTDP + ADP. Its function is as follows. Phosphorylation of dTMP to form dTDP in both de novo and salvage pathways of dTTP synthesis. The polypeptide is Thymidylate kinase (Alkalilimnicola ehrlichii (strain ATCC BAA-1101 / DSM 17681 / MLHE-1)).